The sequence spans 92 residues: Kinetoplastid membrane protein 11C (92 aa).

Belongs to the KMP-11 family. Monomer.

The protein resides in the cytoplasm. Its subcellular location is the cytoskeleton. It is found in the cell projection. It localises to the cilium. The protein localises to the flagellum. Its function is as follows. May be involved in the regulation of the cytoskeleton through interaction with the subpellicular microtubules. May be involved in parasite mobility and attachment to the surface of the host cell. Behaves as a strong immunogen during infection. The polypeptide is Kinetoplastid membrane protein 11C (KMP-11C) (Leishmania infantum).